Consider the following 607-residue polypeptide: Elongation factor 4 (607 aa).

Positions 11–193 (EKIRNFSIIA…QIVEKVPAPQ (183 aa)) constitute a tr-type G domain. Residues 23 to 28 (DHGKST) and 140 to 143 (NKID) each bind GTP.

The protein belongs to the TRAFAC class translation factor GTPase superfamily. Classic translation factor GTPase family. LepA subfamily.

The protein resides in the cell membrane. It catalyses the reaction GTP + H2O = GDP + phosphate + H(+). Required for accurate and efficient protein synthesis under certain stress conditions. May act as a fidelity factor of the translation reaction, by catalyzing a one-codon backward translocation of tRNAs on improperly translocated ribosomes. Back-translocation proceeds from a post-translocation (POST) complex to a pre-translocation (PRE) complex, thus giving elongation factor G a second chance to translocate the tRNAs correctly. Binds to ribosomes in a GTP-dependent manner. The protein is Elongation factor 4 of Lactococcus lactis subsp. cremoris (strain MG1363).